A 353-amino-acid chain; its full sequence is DNA polymerase IV (353 aa).

In terms of domain architecture, UmuC spans 14–198 (IIHIDMDAFF…MDISKFHGVG (185 aa)). Mg(2+) is bound by residues aspartate 18 and aspartate 116. Glutamate 117 is a catalytic residue.

Belongs to the DNA polymerase type-Y family. Monomer. Requires Mg(2+) as cofactor.

It is found in the cytoplasm. It catalyses the reaction DNA(n) + a 2'-deoxyribonucleoside 5'-triphosphate = DNA(n+1) + diphosphate. Functionally, poorly processive, error-prone DNA polymerase involved in untargeted mutagenesis. Copies undamaged DNA at stalled replication forks, which arise in vivo from mismatched or misaligned primer ends. These misaligned primers can be extended by PolIV. Exhibits no 3'-5' exonuclease (proofreading) activity. May be involved in translesional synthesis, in conjunction with the beta clamp from PolIII. This chain is DNA polymerase IV, found in Streptococcus pneumoniae serotype 2 (strain D39 / NCTC 7466).